Reading from the N-terminus, the 304-residue chain is Glycine--tRNA ligase alpha subunit (304 aa).

Belongs to the class-II aminoacyl-tRNA synthetase family. As to quaternary structure, tetramer of two alpha and two beta subunits.

The protein localises to the cytoplasm. The enzyme catalyses tRNA(Gly) + glycine + ATP = glycyl-tRNA(Gly) + AMP + diphosphate. This chain is Glycine--tRNA ligase alpha subunit, found in Afipia carboxidovorans (strain ATCC 49405 / DSM 1227 / KCTC 32145 / OM5) (Oligotropha carboxidovorans).